The following is a 92-amino-acid chain: C-C motif chemokine 3 (92 aa).

The signal sequence occupies residues 1–23; that stretch reads MKVSTAALAVLLCTMALWNEVFS. Cystine bridges form between cysteine 34/cysteine 57 and cysteine 35/cysteine 73.

Belongs to the intercrine beta (chemokine CC) family. In terms of assembly, self-associates. Also heterodimer of MIP-1-alpha(4-69) and MIP-1-beta(3-69). Interacts with CCR1.

The protein localises to the secreted. Functionally, monokine with inflammatory and chemokinetic properties. Binds to CCR1, CCR4 and CCR5. One of the major HIV-suppressive factors produced by CD8+ T-cells. Recombinant MIP-1-alpha induces a dose-dependent inhibition of different strains of HIV-1, HIV-2, and simian immunodeficiency virus (SIV). This chain is C-C motif chemokine 3 (Ccl3), found in Rattus norvegicus (Rat).